The primary structure comprises 508 residues: MVTIQADEISNIIRERIEQYNREVKIVNTGTVLQVGDGIARIHGLDEVMAGELVEFQEGTIGIALNLESTNVGVVLMGDGLLIQEGSSVKATGKIAQIPVSEAYLGRVINALAKPIDGRGEISSSEYRLIESPAPGIISRRSVYEPLQTGLIAIDSMIPIGRGQRELIIGDRQTGKTAVATDTILNQQGQNVICVYVAIGQKASSVAQVVTTFQEKGAMEYTIVVAETADSPATLQYLAPYTGAALAEYFMYRERHTLIIYDDLSKQAQAYRQMSLLLRRPPGREAYPGDVFYLHSRLLERAAKLSSLLGEGSMTALPIVETQSGDVSAYIPTNVISITDGQIFLSADLFNAGIRPAINVGISVSRVGSAAQIKAMKQVAGKLKLELAQFAELEAFAQFASDLDKATQNQLARGQRLRELLKQSQSAPLAVEEQILTIYTGTNGYLDSLEVGQVRKFLVELRTYLKTNKPQFQEIISSTKIFTEEAEAILKEAIQEQRERFILQEQAA.

Residue glycine 170–threonine 177 participates in ATP binding.

The protein belongs to the ATPase alpha/beta chains family. F-type ATPases have 2 components, CF(1) - the catalytic core - and CF(0) - the membrane proton channel. CF(1) has five subunits: alpha(3), beta(3), gamma(1), delta(1), epsilon(1). CF(0) has four main subunits: a, b, b' and c.

It localises to the plastid. Its subcellular location is the chloroplast thylakoid membrane. It catalyses the reaction ATP + H2O + 4 H(+)(in) = ADP + phosphate + 5 H(+)(out). In terms of biological role, produces ATP from ADP in the presence of a proton gradient across the membrane. The alpha chain is a regulatory subunit. The polypeptide is ATP synthase subunit alpha, chloroplastic (Helianthus annuus (Common sunflower)).